Here is a 301-residue protein sequence, read N- to C-terminus: 4-hydroxy-tetrahydrodipicolinate synthase (301 aa).

Threonine 57 provides a ligand contact to pyruvate. The Proton donor/acceptor role is filled by tyrosine 145. Lysine 173 acts as the Schiff-base intermediate with substrate in catalysis. A pyruvate-binding site is contributed by isoleucine 213.

It belongs to the DapA family. In terms of assembly, homotetramer; dimer of dimers.

Its subcellular location is the cytoplasm. It carries out the reaction L-aspartate 4-semialdehyde + pyruvate = (2S,4S)-4-hydroxy-2,3,4,5-tetrahydrodipicolinate + H2O + H(+). Its pathway is amino-acid biosynthesis; L-lysine biosynthesis via DAP pathway; (S)-tetrahydrodipicolinate from L-aspartate: step 3/4. In terms of biological role, catalyzes the condensation of (S)-aspartate-beta-semialdehyde [(S)-ASA] and pyruvate to 4-hydroxy-tetrahydrodipicolinate (HTPA). This is 4-hydroxy-tetrahydrodipicolinate synthase from Corynebacterium diphtheriae (strain ATCC 700971 / NCTC 13129 / Biotype gravis).